Reading from the N-terminus, the 121-residue chain is Small ribosomal subunit protein uS11c (121 aa).

Belongs to the universal ribosomal protein uS11 family. As to quaternary structure, part of the 30S ribosomal subunit.

It is found in the plastid. Its subcellular location is the chloroplast. The chain is Small ribosomal subunit protein uS11c from Cyanidioschyzon merolae (strain NIES-3377 / 10D) (Unicellular red alga).